A 557-amino-acid polypeptide reads, in one-letter code: MPSDIEIARAATLKPIAQVAEKLGIPDEALHNYGKHIAKIDHDFIASLEGKPEGKLVLVTAISPTPAGEGKTTTTVGLGDALNRIGKRAVMCLREPSLGPCFGMKGGAAGGGKAQVVPMEQINLHFTGDFHAITSAHSLAAALIDNHIYWANELNIDVRRIHWRRVVDMNDRALRAINQSLGGVANGFPREDGFDITVASEVMAVFCLAKNLADLEERLGRIVIAETRDRKPVTLADVKATGAMTVLLKDALQPNLVQTLEGNPALIHGGPFANIAHGCNSVIATRTGLRLADYTVTEAGFGADLGAEKFIDIKCRQTGLKPSAVVIVATIRALKMHGGVNKKDLQAENLDALEKGFANLERHVNNVRSFGLPVVVGVNHFFQDTDAEHARLKELCRDRLQVEAITCKHWAEGGAGAEALAQAVVKLAEGEQKPLTFAYETETKITDKIKAIATKLYGAADIQIESKAATKLAGFEKDGYGGLPVCMAKTQYSFSTDPTLMGAPSGHLVSVRDVRLSAGAGFVVVICGEIMTMPGLPKVPAADTIRLDANGQIDGLF.

65–72 (TPAGEGKT) contacts ATP.

This sequence belongs to the formate--tetrahydrofolate ligase family. In terms of assembly, homotetramer.

The enzyme catalyses (6S)-5,6,7,8-tetrahydrofolate + formate + ATP = (6R)-10-formyltetrahydrofolate + ADP + phosphate. Its pathway is one-carbon metabolism; tetrahydrofolate interconversion. The protein is Formate--tetrahydrofolate ligase (fhs) of Methylorubrum extorquens (strain ATCC 14718 / DSM 1338 / JCM 2805 / NCIMB 9133 / AM1) (Methylobacterium extorquens).